The sequence spans 439 residues: Argininosuccinate lyase (439 aa).

This sequence belongs to the lyase 1 family. Argininosuccinate lyase subfamily.

The protein resides in the cytoplasm. It catalyses the reaction 2-(N(omega)-L-arginino)succinate = fumarate + L-arginine. It functions in the pathway amino-acid biosynthesis; L-arginine biosynthesis; L-arginine from L-ornithine and carbamoyl phosphate: step 3/3. The sequence is that of Argininosuccinate lyase from Caldanaerobacter subterraneus subsp. tengcongensis (strain DSM 15242 / JCM 11007 / NBRC 100824 / MB4) (Thermoanaerobacter tengcongensis).